The sequence spans 507 residues: Serine/threonine-protein kinase CBK1 (507 aa).

The disordered stretch occupies residues 1–30; sequence MQKVSGSGKKTTAFQQRKSDSVYNNNEMNK. A Protein kinase domain is found at 126 to 431; sequence FHTVKVIGKG…ANDIKLHPFF (306 aa). ATP contacts are provided by residues 132-140 and lysine 155; that span reads IGKGAFGEV. Catalysis depends on aspartate 249, which acts as the Proton acceptor. Residues 432–505 form the AGC-kinase C-terminal domain; the sequence is RGVNWDTIRE…KRFDMMTQKG (74 aa).

The protein belongs to the protein kinase superfamily. STE Ser/Thr protein kinase family. COT1 subfamily.

The catalysed reaction is L-seryl-[protein] + ATP = O-phospho-L-seryl-[protein] + ADP + H(+). It carries out the reaction L-threonyl-[protein] + ATP = O-phospho-L-threonyl-[protein] + ADP + H(+). Functionally, protein kinase that seems to play a role in signaling pathways necessary for cell growth and mating. The sequence is that of Serine/threonine-protein kinase CBK1 (CBK1) from Pneumocystis carinii.